The following is a 1136-amino-acid chain: Probable phospholipid-transporting ATPase IIB (1136 aa).

Residues 1-145 (MADQIPLYPV…IKNQKYNIFT (145 aa)) lie on the Cytoplasmic side of the membrane. A helical transmembrane segment spans residues 146–166 (FIPGVLYEQFKFFLNLYFLIV). The Extracellular portion of the chain corresponds to 167 to 174 (SCSQFVPA). A helical transmembrane segment spans residues 175-195 (LKIGYLYTYWAPLGFVLAVTI). At 196–383 (MREAVDEFRR…LDLELNQLTK (188 aa)) the chain is on the cytoplasmic side. The chain crosses the membrane as a helical span at residues 384–404 (ALFLALVALSVVMVTLQGFAG). Over 405–408 (PWYR) the chain is Extracellular. Residues 409–429 (SLFRFLLLFSYIIPISLRVNL) traverse the membrane as a helical segment. The Cytoplasmic portion of the chain corresponds to 430-939 (DMGKAAYGWM…ALGQFVMHRG (510 aa)). The active-site 4-aspartylphosphate intermediate is D469. ATP-binding residues include D469, K470, and T471. Residue D469 participates in Mg(2+) binding. A Mg(2+)-binding site is contributed by T471. The disordered stretch occupies residues 514 to 538 (AGGSSAASTPPRKAPSSAPKVRRSV). The ATP site is built by E591, F633, K638, K657, R686, T687, T766, G767, D768, R848, and K854. D874 lines the Mg(2+) pocket. Residues N877 and D878 each contribute to the ATP site. Position 878 (D878) interacts with Mg(2+). Residues 940–960 (LIISTMQAVFSSVFYFASVPL) traverse the membrane as a helical segment. Over 961–962 (YQ) the chain is Extracellular. Residues 963-983 (GFLMVGYATVYTMFPVFSLVL) form a helical membrane-spanning segment. Over 984–1012 (DQDVKPEMAMLYPELYKDLTKGRSLSFKT) the chain is Cytoplasmic. A helical membrane pass occupies residues 1013-1033 (FLVWVLISIYQGGILMFGALV). The Extracellular portion of the chain corresponds to 1034 to 1041 (LFESEFVH). A helical transmembrane segment spans residues 1042-1062 (VVAISFTALVLTELLMVALTV). Residues 1063–1066 (RTWH) lie on the Cytoplasmic side of the membrane. A helical transmembrane segment spans residues 1067-1087 (WLMVVAQLLSLGCYVASLAFL). The Extracellular portion of the chain corresponds to 1088 to 1098 (NEYFDVAFITT). The chain crosses the membrane as a helical span at residues 1099-1119 (VTFVWKVSAITVVSCLPLYVL). The Cytoplasmic segment spans residues 1120-1136 (KYLKRKLSPPSYSKLSS).

It belongs to the cation transport ATPase (P-type) (TC 3.A.3) family. Type IV subfamily. Mg(2+) is required as a cofactor.

It localises to the golgi apparatus. It is found in the trans-Golgi network membrane. It catalyses the reaction ATP + H2O + phospholipidSide 1 = ADP + phosphate + phospholipidSide 2.. The chain is Probable phospholipid-transporting ATPase IIB (ATP9B) from Bos taurus (Bovine).